A 126-amino-acid polypeptide reads, in one-letter code: Fatty acid-binding protein 10-A, liver basic (126 aa).

Residues Lys57, Lys77, His99, and Gln101 each contribute to the cholate site.

It belongs to the calycin superfamily. Fatty-acid binding protein (FABP) family. Expressed in the developing embryonic liver from 48 hpf. Also expressed in the liver of 5-day-old larvae. In adults, primarily expressed in the liver, with weak expression in the testis and intestine.

The protein resides in the cytoplasm. In terms of biological role, binds hydrophobic ligands, such as cholate, in the cytoplasm. May be involved in intracellular lipid transport. Binds one cholate per subunit. This is Fatty acid-binding protein 10-A, liver basic (fabp10a) from Danio rerio (Zebrafish).